Consider the following 501-residue polypeptide: Probable cytosol aminopeptidase (501 aa).

2 residues coordinate Mn(2+): lysine 272 and aspartate 277. Lysine 284 is a catalytic residue. Positions 295, 354, and 356 each coordinate Mn(2+). The active site involves arginine 358.

It belongs to the peptidase M17 family. Mn(2+) is required as a cofactor.

Its subcellular location is the cytoplasm. It catalyses the reaction Release of an N-terminal amino acid, Xaa-|-Yaa-, in which Xaa is preferably Leu, but may be other amino acids including Pro although not Arg or Lys, and Yaa may be Pro. Amino acid amides and methyl esters are also readily hydrolyzed, but rates on arylamides are exceedingly low.. It carries out the reaction Release of an N-terminal amino acid, preferentially leucine, but not glutamic or aspartic acids.. Presumably involved in the processing and regular turnover of intracellular proteins. Catalyzes the removal of unsubstituted N-terminal amino acids from various peptides. This Buchnera aphidicola subsp. Baizongia pistaciae (strain Bp) protein is Probable cytosol aminopeptidase.